Reading from the N-terminus, the 88-residue chain is Exodeoxyribonuclease 7 small subunit (88 aa).

This sequence belongs to the XseB family. In terms of assembly, heterooligomer composed of large and small subunits.

The protein localises to the cytoplasm. It catalyses the reaction Exonucleolytic cleavage in either 5'- to 3'- or 3'- to 5'-direction to yield nucleoside 5'-phosphates.. Functionally, bidirectionally degrades single-stranded DNA into large acid-insoluble oligonucleotides, which are then degraded further into small acid-soluble oligonucleotides. In Tolumonas auensis (strain DSM 9187 / NBRC 110442 / TA 4), this protein is Exodeoxyribonuclease 7 small subunit.